A 141-amino-acid polypeptide reads, in one-letter code: ATP synthase epsilon chain (141 aa).

This sequence belongs to the ATPase epsilon chain family. In terms of assembly, F-type ATPases have 2 components, CF(1) - the catalytic core - and CF(0) - the membrane proton channel. CF(1) has five subunits: alpha(3), beta(3), gamma(1), delta(1), epsilon(1). CF(0) has three main subunits: a, b and c.

Its subcellular location is the cell inner membrane. Functionally, produces ATP from ADP in the presence of a proton gradient across the membrane. The protein is ATP synthase epsilon chain of Burkholderia cenocepacia (strain ATCC BAA-245 / DSM 16553 / LMG 16656 / NCTC 13227 / J2315 / CF5610) (Burkholderia cepacia (strain J2315)).